Here is a 474-residue protein sequence, read N- to C-terminus: Aspartyl/glutamyl-tRNA(Asn/Gln) amidotransferase subunit B (474 aa).

The protein belongs to the GatB/GatE family. GatB subfamily. In terms of assembly, heterotrimer of A, B and C subunits.

The enzyme catalyses L-glutamyl-tRNA(Gln) + L-glutamine + ATP + H2O = L-glutaminyl-tRNA(Gln) + L-glutamate + ADP + phosphate + H(+). It carries out the reaction L-aspartyl-tRNA(Asn) + L-glutamine + ATP + H2O = L-asparaginyl-tRNA(Asn) + L-glutamate + ADP + phosphate + 2 H(+). Allows the formation of correctly charged Asn-tRNA(Asn) or Gln-tRNA(Gln) through the transamidation of misacylated Asp-tRNA(Asn) or Glu-tRNA(Gln) in organisms which lack either or both of asparaginyl-tRNA or glutaminyl-tRNA synthetases. The reaction takes place in the presence of glutamine and ATP through an activated phospho-Asp-tRNA(Asn) or phospho-Glu-tRNA(Gln). This is Aspartyl/glutamyl-tRNA(Asn/Gln) amidotransferase subunit B from Desulfotalea psychrophila (strain LSv54 / DSM 12343).